Here is a 509-residue protein sequence, read N- to C-terminus: Putative aldehyde dehydrogenase family 7 member A1 homolog (509 aa).

244–249 is an NAD(+) binding site; that stretch reads GSTEVG. Residue Glu-266 is the Proton acceptor of the active site. Cys-300 acts as the Nucleophile in catalysis.

Belongs to the aldehyde dehydrogenase family. As to quaternary structure, homotetramer.

The enzyme catalyses an aldehyde + NAD(+) + H2O = a carboxylate + NADH + 2 H(+). This Dictyostelium discoideum (Social amoeba) protein is Putative aldehyde dehydrogenase family 7 member A1 homolog.